The sequence spans 224 residues: Ribonuclease HII (224 aa).

The RNase H type-2 domain maps to 17 to 201 (GTVIGVDEAG…VLSNLSVKKV (185 aa)). Residues D23, E24, and D111 each contribute to the a divalent metal cation site.

This sequence belongs to the RNase HII family. Mn(2+) is required as a cofactor. The cofactor is Mg(2+).

The protein localises to the cytoplasm. It carries out the reaction Endonucleolytic cleavage to 5'-phosphomonoester.. In terms of biological role, endonuclease that specifically degrades the RNA of RNA-DNA hybrids. The polypeptide is Ribonuclease HII (Pseudothermotoga lettingae (strain ATCC BAA-301 / DSM 14385 / NBRC 107922 / TMO) (Thermotoga lettingae)).